The following is a 321-amino-acid chain: Cytochrome c biogenesis protein CcsA (321 aa).

The next 8 membrane-spanning stretches (helical) occupy residues 17 to 37 (IVSI…IVGL), 43 to 63 (KGMI…WIYS), 71 to 91 (LYES…VPKI), 98 to 118 (LSAI…SGLL), 143 to 163 (MVLS…LLVI), 225 to 245 (VISL…VWAN), 258 to 275 (ETWA…LHTR), and 286 to 306 (AIVA…VNLL).

The protein belongs to the CcmF/CycK/Ccl1/NrfE/CcsA family. In terms of assembly, may interact with Ccs1.

The protein localises to the plastid. The protein resides in the chloroplast thylakoid membrane. Functionally, required during biogenesis of c-type cytochromes (cytochrome c6 and cytochrome f) at the step of heme attachment. The sequence is that of Cytochrome c biogenesis protein CcsA from Platanus occidentalis (Sycamore).